Consider the following 131-residue polypeptide: Small ribosomal subunit protein uS8 (131 aa).

It belongs to the universal ribosomal protein uS8 family. Part of the 30S ribosomal subunit. Contacts proteins S5 and S12.

One of the primary rRNA binding proteins, it binds directly to 16S rRNA central domain where it helps coordinate assembly of the platform of the 30S subunit. The protein is Small ribosomal subunit protein uS8 of Campylobacter jejuni subsp. doylei (strain ATCC BAA-1458 / RM4099 / 269.97).